Consider the following 59-residue polypeptide: Potassium channel toxin alpha-KTx 16.2 (59 aa).

An N-terminal signal peptide occupies residues 1–22 (MKIFSILLVALIICSISICTEA). 3 cysteine pairs are disulfide-bonded: cysteine 30–cysteine 51, cysteine 36–cysteine 56, and cysteine 40–cysteine 58.

The protein belongs to the short scorpion toxin superfamily. Potassium channel inhibitor family. Alpha-KTx 16 subfamily. As to expression, expressed by the venom gland.

The protein resides in the secreted. Its function is as follows. Alpha-KTx 16.2: inhibits large conductance calcium-activated potassium channels (KCa1.1/Slo-beta4 KCNMA1/KCNMB4). It appears to block channel activity by a simple bimolecular inhibition process. Shows a fast association rate and a slow dissociation rate of binding on rat brain synaptosome. Significantly inhibits voltage-dependent sodium current and voltage-dependent delayed rectifier potassium currents. Functionally, significantly inhibits voltage-dependent sodium current (Nav) and voltage-dependent delayed rectifier potassium current. The polypeptide is Potassium channel toxin alpha-KTx 16.2 (Olivierus martensii (Manchurian scorpion)).